The chain runs to 248 residues: MIKATYSSAKDFYSLLSGLLKVTDEIILNFTEDSIFSRYLTDDKVLMVIFKIPKEYLEDYTIDKPLGIKININDLKKILGKAKSKSATVTLEETEAGLKVTVRDEKTGTRSNIYIKGEKTSIDQLTEPKVNLSVTFTTDGDVLKDIARDLSLVGEEVEISADENTVTLSTEEAGRTYKSLLKQDKPLKSLNVESPSKAVYSIEVLKDVFKVTSISQNVTVGFGNNIPMKIEVPTDSGGQLIFWIAPRL.

The protein belongs to the PCNA family. As to quaternary structure, the subunits circularize to form a toroid; DNA passes through its center. Replication factor C (RFC) is required to load the toroid on the DNA. Forms a dimeric complex with PCNA3 and trimeric complexes PCNA123 and PCNA323; does not form homotrimers. Crystal structures show a heterotetramer of 2 PCNA2 and 2 PCNA3, which would be large enough to clamp a Holliday junction.

Sliding clamp subunit that acts as a moving platform for DNA processing. Responsible for tethering the catalytic subunit of DNA polymerase and other proteins to DNA during high-speed replication. Both trimeric complexes inhibit DNA ligase and both 3'-5' and 5'-3' activity of Hel308 (Hjm) helicase, but stimulate Hjc, the Holliday junction cleavage enzyme. The chain is DNA polymerase sliding clamp 2 from Sulfurisphaera tokodaii (strain DSM 16993 / JCM 10545 / NBRC 100140 / 7) (Sulfolobus tokodaii).